Reading from the N-terminus, the 270-residue chain is Phthiotriol/phenolphthiotriol dimycocerosates methyltransferase (270 aa).

It belongs to the methyltransferase superfamily. Phthiotriol/phenolphthiotriol dimycocerosates methyltransferase family.

Its function is as follows. Catalyzes the methylation of the lipid moiety of the intermediate compounds phthiotriol and glycosylated phenolphthiotriol dimycoserosates to form phthiocerol dimycocerosates (DIM A) and glycosylated phenolphthiocerol dimycocerosates (PGL). The protein is Phthiotriol/phenolphthiotriol dimycocerosates methyltransferase of Mycobacterium bovis (strain ATCC BAA-935 / AF2122/97).